Here is a 122-residue protein sequence, read N- to C-terminus: Large ribosomal subunit protein bL12 (122 aa).

Belongs to the bacterial ribosomal protein bL12 family. Homodimer. Part of the ribosomal stalk of the 50S ribosomal subunit. Forms a multimeric L10(L12)X complex, where L10 forms an elongated spine to which 2 to 4 L12 dimers bind in a sequential fashion. Binds GTP-bound translation factors.

Forms part of the ribosomal stalk which helps the ribosome interact with GTP-bound translation factors. Is thus essential for accurate translation. The sequence is that of Large ribosomal subunit protein bL12 from Yersinia pseudotuberculosis serotype O:1b (strain IP 31758).